Consider the following 121-residue polypeptide: Large ribosomal subunit protein bL12 (121 aa).

Belongs to the bacterial ribosomal protein bL12 family. Homodimer. Part of the ribosomal stalk of the 50S ribosomal subunit. Forms a multimeric L10(L12)X complex, where L10 forms an elongated spine to which 2 to 4 L12 dimers bind in a sequential fashion. Binds GTP-bound translation factors.

Its function is as follows. Forms part of the ribosomal stalk which helps the ribosome interact with GTP-bound translation factors. Is thus essential for accurate translation. The sequence is that of Large ribosomal subunit protein bL12 from Vibrio cholerae serotype O1 (strain ATCC 39541 / Classical Ogawa 395 / O395).